The following is a 499-amino-acid chain: Lysine--tRNA ligase (499 aa).

Mg(2+) is bound by residues glutamate 409 and glutamate 416.

It belongs to the class-II aminoacyl-tRNA synthetase family. In terms of assembly, homodimer. Mg(2+) is required as a cofactor.

It localises to the cytoplasm. The enzyme catalyses tRNA(Lys) + L-lysine + ATP = L-lysyl-tRNA(Lys) + AMP + diphosphate. This chain is Lysine--tRNA ligase, found in Thioalkalivibrio sulfidiphilus (strain HL-EbGR7).